The sequence spans 102 residues: Small ribosomal subunit protein uS10 (102 aa).

It belongs to the universal ribosomal protein uS10 family. As to quaternary structure, part of the 30S ribosomal subunit.

Its function is as follows. Involved in the binding of tRNA to the ribosomes. In Mycoplasma mycoides subsp. mycoides SC (strain CCUG 32753 / NCTC 10114 / PG1), this protein is Small ribosomal subunit protein uS10.